Consider the following 295-residue polypeptide: Ribosomal RNA small subunit methyltransferase H (295 aa).

Residues glycine 32–tyrosine 34, aspartate 50, phenylalanine 77, aspartate 98, and glutamine 105 each bind S-adenosyl-L-methionine. A disordered region spans residues lysine 275–glutamate 295.

Belongs to the methyltransferase superfamily. RsmH family.

The protein localises to the cytoplasm. It carries out the reaction cytidine(1402) in 16S rRNA + S-adenosyl-L-methionine = N(4)-methylcytidine(1402) in 16S rRNA + S-adenosyl-L-homocysteine + H(+). Its function is as follows. Specifically methylates the N4 position of cytidine in position 1402 (C1402) of 16S rRNA. The polypeptide is Ribosomal RNA small subunit methyltransferase H (Anaplasma phagocytophilum (strain HZ)).